The sequence spans 119 residues: Small ribosomal subunit protein bS16 (119 aa).

The interval 81 to 119 is disordered; the sequence is GLAKRPARNNPKKAEPGQKAKERAAARAEKAGAGDDAAA. The segment covering 92–113 has biased composition (basic and acidic residues); it reads KKAEPGQKAKERAAARAEKAGA.

The protein belongs to the bacterial ribosomal protein bS16 family.

The polypeptide is Small ribosomal subunit protein bS16 (Methylobacterium sp. (strain 4-46)).